Reading from the N-terminus, the 1430-residue chain is Target of rapamycin complex 2 subunit TSC11 (1430 aa).

Residues 1-62 (MSIPHSAKQS…TITNESSKRN (62 aa)) form a disordered region. 2 stretches are compositionally biased toward polar residues: residues 7-26 (AKQS…TTPL) and 35-44 (NSSTQISSAK). A Phosphoserine modification is found at S19. Over residues 45-57 (NITSSSPSTITNE) the composition is skewed to low complexity. Phosphoserine occurs at positions 81, 84, 87, and 141. Residues 91–180 (ARRTRSTMTK…EKHIFDLKQQ (90 aa)) are a coiled coil. Residues 182-285 (DKKRQRSLTT…NLTGDTEKDL (104 aa)) are disordered. The segment covering 233–265 (TTPTSGTERNSQQNLNRNSTVNSRNNENHSTLS) has biased composition (polar residues). The N-terminal Ras-GEF domain occupies 995–1100 (SVVAVADQAL…FQQKSRLPLH (106 aa)).

This sequence belongs to the RICTOR family. The target of rapamycin complex 2 (TORC2) is composed of at least AVO1, AVO2, BIT61, LST8, TOR2 and TSC11. TORC2 forms a homodimer. Contrary to TORC1, TORC2 does not bind to and is not sensitive to FKBP-rapamycin. TSC11 binds to the N-terminal HEAT repeat region in TOR2 and is required for TORC2 integrity by tethering AVO1 and AVO2 to the complex. Post-translationally, phosphorylated by TOR2; when part of TORC2.

It localises to the cell membrane. The protein localises to the vacuole membrane. Functionally, essential component of TORC2, which regulates cell cycle-dependent polarization of the actin-cytoskeleton and cell wall integrity. TORC2 controls polarity of the actin cytoskeleton, which is required for orienting the secretory pathway toward discrete growth sites, via the RHO1/PKC1/MAPK cell integrity pathway. TSC11 may exert its functions through two distinct mechanisms, one mediated by AVO1 and the other mediated by AVO2 and SLM1. In Saccharomyces cerevisiae (strain ATCC 204508 / S288c) (Baker's yeast), this protein is Target of rapamycin complex 2 subunit TSC11 (TSC11).